The sequence spans 1377 residues: Pleckstrin homology-like domain family B member 1 (1377 aa).

Position 51 is a phosphoserine (Ser-51). An FHA domain is found at 64-125 (TVIGSAARDI…LTQGCMLCLG (62 aa)). Residue Arg-131 is modified to Asymmetric dimethylarginine. Positions 150 to 187 (RAPGPPYSPVPAESESLVNGNHTPQTATRGPSACASHS) are disordered. Residues 165–178 (SLVNGNHTPQTATR) show a composition bias toward polar residues. Residues Ser-192, Ser-220, and Ser-223 each carry the phosphoserine modification. Disordered regions lie at residues 211 to 334 (AAGK…LTDS) and 370 to 535 (GALS…GSFS). The span at 252–273 (SPAFSPLSSPASSGSCASHSPS) shows a compositional bias: low complexity. Residues 288-303 (RSSSYHLALQPPQSRP) are compositionally biased toward polar residues. Residues 309 to 322 (ESPRLSRKGGHERP) show a composition bias toward basic and acidic residues. Ser-324, Ser-334, Ser-381, Ser-404, Ser-430, Ser-443, Ser-461, Ser-470, Ser-489, and Ser-501 each carry phosphoserine. Positions 456 to 473 (ELPPLSPSLSRRALSPLP) are enriched in low complexity. Basic and acidic residues predominate over residues 481–491 (KLNREVAESPR). Arg-512 is subject to Omega-N-methylarginine. Phosphoserine occurs at positions 518 and 520. Thr-522 is modified (phosphothreonine). 7 positions are modified to phosphoserine: Ser-533, Ser-539, Ser-551, Ser-555, Ser-563, Ser-578, and Ser-583. The span at 653 to 663 (PSRGLAGASGR) shows a compositional bias: low complexity. Disordered regions lie at residues 653-707 (PSRG…APST), 936-1019 (TGPA…GSLP), and 1119-1138 (SMET…DNMS). Basic and acidic residues predominate over residues 677–691 (ESMERSDEENLKEEC). Ser-678 carries the post-translational modification Phosphoserine. The stretch at 683 to 809 (DEENLKEECS…TETKLFEDLE (127 aa)) forms a coiled coil. Phosphoserine is present on residues Ser-971 and Ser-1017. The segment covering 971-992 (SPLPRTRSGPLPSSSGSSSSSS) has biased composition (low complexity). Over residues 1009–1018 (LLTQNGTGSL) the composition is skewed to polar residues. Residues 1144–1208 (DMGKIEEMEK…ARRQQLVEKE (65 aa)) adopt a coiled-coil conformation. Residues 1256–1370 (SKVCRGYLVK…WMDVIVTGAE (115 aa)) enclose the PH domain.

The chain is Pleckstrin homology-like domain family B member 1 (PHLDB1) from Homo sapiens (Human).